We begin with the raw amino-acid sequence, 260 residues long: Serine hydroxymethyltransferase (260 aa).

At K60 the chain carries N6-(pyridoxal phosphate)lysine.

It belongs to the SHMT family. In terms of assembly, homodimer. Pyridoxal 5'-phosphate serves as cofactor.

Its subcellular location is the cytoplasm. The catalysed reaction is (6R)-5,10-methylene-5,6,7,8-tetrahydrofolate + glycine + H2O = (6S)-5,6,7,8-tetrahydrofolate + L-serine. It functions in the pathway one-carbon metabolism; tetrahydrofolate interconversion. The protein operates within amino-acid biosynthesis; glycine biosynthesis; glycine from L-serine: step 1/1. Its function is as follows. Catalyzes the reversible interconversion of serine and glycine with tetrahydrofolate (THF) serving as the one-carbon carrier. This reaction serves as the major source of one-carbon groups required for the biosynthesis of purines, thymidylate, methionine, and other important biomolecules. Also exhibits THF-independent aldolase activity toward beta-hydroxyamino acids, producing glycine and aldehydes, via a retro-aldol mechanism. The chain is Serine hydroxymethyltransferase from Corynebacterium sp. (strain P-1).